A 714-amino-acid chain; its full sequence is Fimbrin-3 (714 aa).

Residues 7–55 (VIVSDPWLQSQLTQVELRSLNSKFVALKNQSGKVTLEDLPSVLVKVKSL) enclose the EF-hand domain. 4 Calponin-homology (CH) domains span residues 124–241 (QSEK…KIQL), 269–372 (LPPE…HERN), 393–499 (CRDE…RTHM), and 514–622 (DMTD…YWSL). 2 actin-binding regions span residues 124-372 (QSEK…HERN) and 393-622 (CRDE…YWSL). The span at 628-662 (SSESSSSSSDSSSTHSTTTTCTSTCTSTDASPAPS) shows a compositional bias: low complexity. The interval 628–694 (SSESSSSSSD…NEVSSLTIEE (67 aa)) is disordered. The segment covering 670–680 (SSLNGEVSSLT) has biased composition (polar residues). Over residues 681-694 (IEEDNEVSSLTIEE) the composition is skewed to acidic residues.

As to quaternary structure, interacts with F-actin.

It localises to the cytoplasm. The protein resides in the cytoskeleton. Cross-links actin filaments (F-actin). Stabilizes and prevents F-actin depolymerization mediated by profilin. May regulate actin cytoarchitecture, cell cycle, cell division, cell elongation and cytoplasmic tractus. The chain is Fimbrin-3 from Arabidopsis thaliana (Mouse-ear cress).